Here is a 164-residue protein sequence, read N- to C-terminus: UPF0201 protein MA_4659 (164 aa).

Belongs to the UPF0201 family.

The polypeptide is UPF0201 protein MA_4659 (Methanosarcina acetivorans (strain ATCC 35395 / DSM 2834 / JCM 12185 / C2A)).